The primary structure comprises 261 residues: tRNA pseudouridine synthase A (261 aa).

Catalysis depends on Asp-52, which acts as the Nucleophile. Tyr-111 is a substrate binding site.

The protein belongs to the tRNA pseudouridine synthase TruA family. Homodimer.

It catalyses the reaction uridine(38/39/40) in tRNA = pseudouridine(38/39/40) in tRNA. Its function is as follows. Formation of pseudouridine at positions 38, 39 and 40 in the anticodon stem and loop of transfer RNAs. This Jannaschia sp. (strain CCS1) protein is tRNA pseudouridine synthase A.